A 668-amino-acid chain; its full sequence is Probable 6-phosphofructo-2-kinase PB17E12.14c (668 aa).

A compositionally biased stretch (basic and acidic residues) spans 1–14 (MSNNNNKDDSELQS). 2 disordered regions span residues 1-105 (MSNN…GSRP) and 136-185 (HRVP…EATN). Composition is skewed to polar residues over residues 46-56 (NDHSFTNTDSV), 65-86 (SPVS…QNSP), and 164-184 (SSMS…SEAT). 197 to 204 (GLPARGKS) is a binding site for ATP. Active-site residues include Asp-281 and Cys-312. Position 346 (Arg-346) interacts with beta-D-fructose 6-phosphate. Glu-540 is a catalytic residue. His-608 serves as the catalytic Proton donor.

The catalysed reaction is beta-D-fructose 6-phosphate + ATP = beta-D-fructose 2,6-bisphosphate + ADP + H(+). In terms of biological role, synthesis of fructose 2,6-bisphosphate. In Schizosaccharomyces pombe (strain 972 / ATCC 24843) (Fission yeast), this protein is Probable 6-phosphofructo-2-kinase PB17E12.14c.